Consider the following 425-residue polypeptide: 5-hydroxytryptamine receptor 7 (425 aa).

Topologically, residues 1 to 72 (MLIQVQPSHL…LLYGDTEKIV (72 aa)) are extracellular. N-linked (GlcNAc...) asparagine glycans are attached at residues N14, N41, and N51. Residues 73-97 (IGVVLSIITLFTIAGNALVIISVCI) traverse the membrane as a helical segment. Over 98 to 107 (VKKLRQPSNY) the chain is Cytoplasmic. A helical membrane pass occupies residues 108–129 (LVVSLAAADLSVAVAVMPFVII). The Extracellular portion of the chain corresponds to 130–141 (TDLVGGEWLFGK). The chain crosses the membrane as a helical span at residues 142–167 (VFCNVFIAMDVMCCTASIMTLCVISV). A disulfide bridge links C144 with C220. Position 151 (D151) interacts with serotonin. Over 168-187 (DRYLGITRPLTYPARQNGKL) the chain is Cytoplasmic. The chain crosses the membrane as a helical span at residues 188-208 (MAKMVFIVWLLSASITLPPLF). Residues 209–226 (GWAKNVNVERVCLISQDF) lie on the Extracellular side of the membrane. Residues 227 to 249 (GYTVYSTAVAFYIPMTVMLVMYQ) form a helical membrane-spanning segment. Topologically, residues 250 to 322 (RIFVAAKISA…SIFKREQKAA (73 aa)) are cytoplasmic. A helical membrane pass occupies residues 323–348 (RTLGIIVGAFTFCWLPFFLLSTARPF). Residues 349–359 (ICGIMCSCMPL) are Extracellular-facing. A helical membrane pass occupies residues 360 to 383 (RLERTLLWLGYTNSLINPLIYAFF). Over 384 to 425 (NRDLRTTFWNLLRCKYTNINRRLSAASMHEALKVTERHEGIL) the chain is Cytoplasmic. C397 is lipidated: S-palmitoyl cysteine.

Belongs to the G-protein coupled receptor 1 family.

Its subcellular location is the cell membrane. G-protein coupled receptor for 5-hydroxytryptamine (serotonin), a biogenic hormone that functions as a neurotransmitter, a hormone and a mitogen. Ligand binding causes a conformation change that triggers signaling via guanine nucleotide-binding proteins (G proteins) and modulates the activity of downstream effectors. HTR7 is coupled to G(s) G alpha proteins and mediates activation of adenylate cyclase activity. This is 5-hydroxytryptamine receptor 7 (htr7) from Xenopus laevis (African clawed frog).